The following is an 872-amino-acid chain: Homeobox-leucine zipper protein ROC6 (872 aa).

Disordered stretches follow at residues 28–53 and 67–130; these read VHNS…GLSL and NRSL…HRHT. Residues 74–85 show a composition bias toward gly residues; the sequence is GNGGSGSGGDGD. Positions 86 to 99 are enriched in basic and acidic residues; sequence SLGRGREEENDSRS. The span at 119–130 shows a compositional bias: basic residues; it reads PRKKKKRYHRHT. The segment at residues 122 to 181 is a DNA-binding region (homeobox); that stretch reads KKKRYHRHTPQQIQELEAVFKECPHPDEKQRMELSRRLNLESRQVKFWFQNRRTQMKQTQ. The stretch at 176-248 forms a coiled coil; sequence QMKQTQIERH…LKDELDRVCA (73 aa). Residues 340–583 form the START domain; that stretch reads GAIDRAVLLE…LQRQCQYLAI (244 aa). Residues 792-818 form a disordered region; it reads HNNGASPSPAEVGSGASPNSAAGGGGG.

The protein belongs to the HD-ZIP homeobox family. Class IV subfamily.

Its subcellular location is the nucleus. Probable transcription factor. The polypeptide is Homeobox-leucine zipper protein ROC6 (ROC6) (Oryza sativa subsp. japonica (Rice)).